The sequence spans 124 residues: MPTITQLIRKQRVKKSVKSKAPALAASPQKRGVCKRVYTTTPRKPNSAMRKVCTVVFTNGYECICYIGGEGHNVQEHGVLLVKGGGVKDLPGVKYHIVRGALDCSGVKDRKQARSKYGAARPKA.

The residue at position 89 (aspartate 89) is a 3-methylthioaspartic acid.

It belongs to the universal ribosomal protein uS12 family. Part of the 30S ribosomal subunit. Contacts proteins S8 and S17. May interact with IF1 in the 30S initiation complex.

Its function is as follows. With S4 and S5 plays an important role in translational accuracy. Functionally, interacts with and stabilizes bases of the 16S rRNA that are involved in tRNA selection in the A site and with the mRNA backbone. Located at the interface of the 30S and 50S subunits, it traverses the body of the 30S subunit contacting proteins on the other side and probably holding the rRNA structure together. The combined cluster of proteins S8, S12 and S17 appears to hold together the shoulder and platform of the 30S subunit. The polypeptide is Small ribosomal subunit protein uS12 (Hamiltonella defensa subsp. Acyrthosiphon pisum (strain 5AT)).